The following is a 173-amino-acid chain: MTFDAFTKVVAQADARGEFLSDAQLDALSRLVAEGNKRIDTVNRITGNASSIVANAARALFAEQPSLIAPGGNVYTNRRMAACLRDMEIILRYVTYAVFTGDASILDDRCLNGLRETYLALGVPGASVAEGVRKMKDAAVAIVSDRNGITQGDCSAIISELGSYFDKAAAAVA.

Residue Asn-73 is modified to N4-methylasparagine. Residues Cys-83 and Cys-154 each coordinate (2R,3E)-phycocyanobilin.

It belongs to the phycobiliprotein family. Heterodimer of an alpha and a beta subunit, which further assembles into trimers and the trimers into hexamers. In terms of processing, contains two covalently linked bilin chromophores.

The protein localises to the cellular thylakoid membrane. Light-harvesting photosynthetic bile pigment-protein from the phycobiliprotein complex (phycobilisome, PBS). Phycocyanin is the major phycobiliprotein in the PBS rod. The chain is C-phycocyanin-2 beta subunit (cpcB2) from Synechococcus sp. (strain ATCC 27144 / PCC 6301 / SAUG 1402/1) (Anacystis nidulans).